The following is a 402-amino-acid chain: Tryptophan synthase beta chain (402 aa).

The residue at position 91 (Lys-91) is an N6-(pyridoxal phosphate)lysine.

This sequence belongs to the TrpB family. In terms of assembly, tetramer of two alpha and two beta chains. The cofactor is pyridoxal 5'-phosphate.

The catalysed reaction is (1S,2R)-1-C-(indol-3-yl)glycerol 3-phosphate + L-serine = D-glyceraldehyde 3-phosphate + L-tryptophan + H2O. The protein operates within amino-acid biosynthesis; L-tryptophan biosynthesis; L-tryptophan from chorismate: step 5/5. In terms of biological role, the beta subunit is responsible for the synthesis of L-tryptophan from indole and L-serine. The polypeptide is Tryptophan synthase beta chain (Streptococcus thermophilus (strain CNRZ 1066)).